A 436-amino-acid polypeptide reads, in one-letter code: Chorismate synthase, chloroplastic (436 aa).

The interval 1 to 24 (MASSSLTSKSILGSTKLGSSSLPS) is disordered. The N-terminal 50 residues, 1 to 50 (MASSSLTSKSILGSTKLGSSSLPSELRRLSSPAVQISLRTQTRKNFQIQA), are a transit peptide targeting the chloroplast.

The protein belongs to the chorismate synthase family. As to quaternary structure, homotetramer. Requires FMNH2 as cofactor.

The protein localises to the plastid. It localises to the chloroplast. The enzyme catalyses 5-O-(1-carboxyvinyl)-3-phosphoshikimate = chorismate + phosphate. Its pathway is metabolic intermediate biosynthesis; chorismate biosynthesis; chorismate from D-erythrose 4-phosphate and phosphoenolpyruvate: step 7/7. Its function is as follows. Catalyzes the last common step of the biosynthesis of aromatic amino acids, produced via the shikimic acid pathway. This is Chorismate synthase, chloroplastic (EMB1144) from Arabidopsis thaliana (Mouse-ear cress).